Reading from the N-terminus, the 428-residue chain is C4-dicarboxylate transport protein (428 aa).

Helical transmembrane passes span 4 to 24 (SLFK…ILLG), 44 to 64 (LIKM…IAGM), 76 to 96 (VALL…LIIV), 142 to 162 (IGAF…LFGF), 184 to 204 (VIFG…FGAM), 222 to 242 (LIIC…GTIA), 289 to 309 (VVGL…SIYL), 326 to 346 (IFHQ…AAGV), and 352 to 372 (IVLA…LALI).

This sequence belongs to the dicarboxylate/amino acid:cation symporter (DAACS) (TC 2.A.23) family.

It localises to the cell inner membrane. Functionally, responsible for the transport of dicarboxylates such as succinate, fumarate, and malate from the periplasm across the membrane. The chain is C4-dicarboxylate transport protein from Salmonella gallinarum (strain 287/91 / NCTC 13346).